The following is a 611-amino-acid chain: Dihydroxy-acid dehydratase (611 aa).

Asp81 lines the Mg(2+) pocket. Cys122 is a [2Fe-2S] cluster binding site. Mg(2+) contacts are provided by Asp123 and Lys124. N6-carboxylysine is present on Lys124. Residue Cys195 participates in [2Fe-2S] cluster binding. Glu491 contacts Mg(2+). The active-site Proton acceptor is the Ser517.

Belongs to the IlvD/Edd family. As to quaternary structure, homodimer. Requires [2Fe-2S] cluster as cofactor. The cofactor is Mg(2+).

It carries out the reaction (2R)-2,3-dihydroxy-3-methylbutanoate = 3-methyl-2-oxobutanoate + H2O. The catalysed reaction is (2R,3R)-2,3-dihydroxy-3-methylpentanoate = (S)-3-methyl-2-oxopentanoate + H2O. The protein operates within amino-acid biosynthesis; L-isoleucine biosynthesis; L-isoleucine from 2-oxobutanoate: step 3/4. It functions in the pathway amino-acid biosynthesis; L-valine biosynthesis; L-valine from pyruvate: step 3/4. In terms of biological role, functions in the biosynthesis of branched-chain amino acids. Catalyzes the dehydration of (2R,3R)-2,3-dihydroxy-3-methylpentanoate (2,3-dihydroxy-3-methylvalerate) into 2-oxo-3-methylpentanoate (2-oxo-3-methylvalerate) and of (2R)-2,3-dihydroxy-3-methylbutanoate (2,3-dihydroxyisovalerate) into 2-oxo-3-methylbutanoate (2-oxoisovalerate), the penultimate precursor to L-isoleucine and L-valine, respectively. This Allorhizobium ampelinum (strain ATCC BAA-846 / DSM 112012 / S4) (Agrobacterium vitis (strain S4)) protein is Dihydroxy-acid dehydratase.